Reading from the N-terminus, the 278-residue chain is HCLS1-associated protein X-1 (278 aa).

An N-acetylserine modification is found at serine 2. Positions serine 2–serine 43 are required for localization in mitochondria. Disordered stretches follow at residues glycine 15–serine 50 and leucine 99–aspartate 262. Residues aspartate 30–serine 43 are compositionally biased toward acidic residues. An involved in HCLS1 binding region spans residues threonine 113 to arginine 278. The span at proline 132–serine 152 shows a compositional bias: basic and acidic residues. The tract at residues valine 174–serine 205 is involved in CASP9 binding. An involved in GNA13 binding region spans residues serine 175–aspartate 246. The interval glutamate 182–arginine 278 is required for localization in sarcoplasmic reticulum. The interval aspartate 183 to arginine 278 is involved in PKD2 binding. Serine 188 and serine 191 each carry phosphoserine. The tract at residues glutamine 202–glutamate 224 is involved in PLN binding. Residues glutamine 202–alanine 244 form an involved in ATP2A2 binding region. The segment at serine 209 to arginine 278 is mediates interaction with UCP3. Residues threonine 216–proline 254 are compositionally biased toward basic and acidic residues. The required for ITGB6 binding stretch occupies residues leucine 269–arginine 278.

Belongs to the HAX1 family. In terms of assembly, interacts with ABCB1, ABCB4 and ABCB11. Directly associates with HCLS1/HS1, through binding to its N-terminal region. Interacts with CTTN. Interacts with PKD2. Interacts with GNA13. Interacts with CASP9. Interacts with ITGB6. Interacts with PLN and ATP2A2; these interactions are inhibited by calcium. Interacts with GRB7. Interacts (via C-terminus) with XIAP/BIRC4 (via BIR 2 domain and BIR 3 domain) and this interaction blocks ubiquitination of XIAP/BIRC4. Interacts with TPC2. Interacts with KCNC3. Interacts with XPO1. Interacts with RNF217. Interacts with UCP3; the interaction is direct and calcium-dependent. Interacts with MAPRE2; this interaction regulates cell migration in keratinocytes. In terms of tissue distribution, present in striated muscles (at protein level).

The protein localises to the mitochondrion matrix. The protein resides in the endoplasmic reticulum. It is found in the nucleus membrane. Its subcellular location is the cytoplasmic vesicle. It localises to the cytoplasm. The protein localises to the cell cortex. The protein resides in the cell membrane. It is found in the sarcoplasmic reticulum. Its subcellular location is the P-body. It localises to the nucleus. In terms of biological role, recruits the Arp2/3 complex to the cell cortex and regulates reorganization of the cortical actin cytoskeleton via its interaction with KCNC3 and the Arp2/3 complex. Slows down the rate of inactivation of KCNC3 channels. Promotes GNA13-mediated cell migration. Involved in the clathrin-mediated endocytosis pathway. May be involved in internalization of ABC transporters such as ABCB11. May inhibit CASP9 and CASP3. Promotes cell survival. May regulate intracellular calcium pools. This is HCLS1-associated protein X-1 (Hax1) from Rattus norvegicus (Rat).